Reading from the N-terminus, the 118-residue chain is Fluoride-specific ion channel FluC 1 (118 aa).

A run of 4 helical transmembrane segments spans residues 5–25 (FVLV…ISVL), 34–54 (FPFA…FLVS), 56–76 (ALGP…YTTF), and 98–118 (YLGC…MLGV). Na(+) is bound by residues Gly71 and Thr74.

It belongs to the fluoride channel Fluc/FEX (TC 1.A.43) family.

It localises to the cell membrane. It catalyses the reaction fluoride(in) = fluoride(out). Its activity is regulated as follows. Na(+) is not transported, but it plays an essential structural role and its presence is essential for fluoride channel function. Fluoride-specific ion channel. Important for reducing fluoride concentration in the cell, thus reducing its toxicity. The polypeptide is Fluoride-specific ion channel FluC 1 (Listeria monocytogenes serotype 4b (strain F2365)).